The sequence spans 402 residues: S-adenosylmethionine synthase (402 aa).

His16 contributes to the ATP binding site. Mg(2+) is bound at residue Asp18. Glu44 contributes to the K(+) binding site. Residues Glu57 and Gln103 each coordinate L-methionine. Residues 103-113 form a flexible loop region; that stretch reads QSPDIAQGVDT. ATP contacts are provided by residues 178 to 180, 249 to 250, Asp258, 264 to 265, Ala281, and Lys285; these read DGK, KF, and RK. Asp258 is a binding site for L-methionine. Lys289 contacts L-methionine.

Belongs to the AdoMet synthase family. As to quaternary structure, homotetramer; dimer of dimers. Requires Mg(2+) as cofactor. K(+) serves as cofactor.

It is found in the cytoplasm. The catalysed reaction is L-methionine + ATP + H2O = S-adenosyl-L-methionine + phosphate + diphosphate. The protein operates within amino-acid biosynthesis; S-adenosyl-L-methionine biosynthesis; S-adenosyl-L-methionine from L-methionine: step 1/1. In terms of biological role, catalyzes the formation of S-adenosylmethionine (AdoMet) from methionine and ATP. The overall synthetic reaction is composed of two sequential steps, AdoMet formation and the subsequent tripolyphosphate hydrolysis which occurs prior to release of AdoMet from the enzyme. The protein is S-adenosylmethionine synthase of Mycobacterium sp. (strain JLS).